A 235-amino-acid polypeptide reads, in one-letter code: Cobalt transport protein CbiM (235 aa).

A signal peptide spans 1 to 33 (MRYLKFFLLLVFLVPSFGFSMHIMEGFLPPTHA). A run of 6 helical transmembrane segments spans residues 34-51 (LIWY…LFTI), 63-83 (MLLA…IPSV), 95-115 (LGAI…VLLF), 118-138 (LLLA…MAIV), 156-176 (NIAV…TTSF), and 199-219 (IFAI…VVVI).

The protein belongs to the CbiM family. Forms an energy-coupling factor (ECF) transporter complex composed of an ATP-binding protein (A component, CbiO), a transmembrane protein (T component, CbiQ) and 2 possible substrate-capture proteins (S components, CbiM and CbiN) of unknown stoichimetry.

The protein localises to the cell inner membrane. The protein operates within cofactor biosynthesis; adenosylcobalamin biosynthesis. In terms of biological role, part of the energy-coupling factor (ECF) transporter complex CbiMNOQ involved in cobalt import. In Thermosipho melanesiensis (strain DSM 12029 / CIP 104789 / BI429), this protein is Cobalt transport protein CbiM.